A 2138-amino-acid chain; its full sequence is Conidial yellow pigment biosynthesis polyketide synthase melA (2138 aa).

Residues 8–244 form an N-terminal acylcarrier protein transacylase domain (SAT) region; that stretch reads YLFGDQTADF…TRVPIHGPYH (237 aa). One can recognise a Ketosynthase family 3 (KS3) domain in the interval 373 to 804; sequence QSKIAIIGLS…GGNTALMVED (432 aa). Active-site for beta-ketoacyl synthase activity residues include Cys545, His680, and His722. The tract at residues 910 to 1229 is malonyl-CoA:ACP transacylase (MAT) domain; sequence FVFTGQGAQY…VSALYMAGIE (320 aa). Ser999 serves as the catalytic For acyl/malonyl transferase activity. A product template (PT) domain region spans residues 1288–1601; it reads SSAAQRVLET…RKILDMALPP (314 aa). Residues 1292 to 1423 form an N-terminal hotdog fold region; it reads QRVLETSGDN…CNIKFFDPSP (132 aa). The PKS/mFAS DH domain maps to 1292–1596; the sequence is QRVLETSGDN…FQGLARKILD (305 aa). The active-site Proton acceptor; for dehydratase activity is the His1324. The segment at 1451-1596 is C-terminal hotdog fold; that stretch reads AHRMKRGMVY…FQGLARKILD (146 aa). Asp1509 serves as the catalytic Proton donor; for dehydratase activity. Residues 1640–1714 enclose the Carrier 1 domain; that stretch reads PSMATRALAI…DFKHLLAQMG (75 aa). Residue Ser1674 is modified to O-(pantetheine 4'-phosphoryl)serine. The disordered stretch occupies residues 1712–1758; it reads QMGPGESSDGSSSEGDMSSAASSTDLSSPNTSGLPTPANEKSMTHGL. The span at 1713–1739 shows a compositional bias: low complexity; sequence MGPGESSDGSSSEGDMSSAASSTDLSS. The span at 1740–1758 shows a compositional bias: polar residues; the sequence is PNTSGLPTPANEKSMTHGL. Residues 1759-1836 form the Carrier 2 domain; the sequence is QGQNDSMRQI…DIETTLDLKP (78 aa). Ser1796 bears the O-(pantetheine 4'-phosphoryl)serine mark. Residues 1863 to 2135 form a claisen cyclase domain region; the sequence is TQHPPATSIL…ELARFIANSM (273 aa). Catalysis depends on Ser1953, which acts as the For Claisen cyclase activity.

It catalyses the reaction 6 malonyl-CoA + acetyl-CoA + 6 H(+) = naphtopyrone YWA1 + 6 CO2 + 7 CoA + H2O. It functions in the pathway pigment biosynthesis. Its pathway is polyketide biosynthesis; heptaketide naphthopyrone YWA1 biosynthesis. Functionally, non-reducing polyketide synthase involved in the biosynthesis of a yellow conidial pigment. Probably forms the heptaketide naphthopyrene YWA1 via condensation of acetate units. This Penicillium expansum (Blue mold rot fungus) protein is Conidial yellow pigment biosynthesis polyketide synthase melA.